Reading from the N-terminus, the 863-residue chain is Eukaryotic translation initiation factor 3 subunit C (863 aa).

The tract at residues 1–92 is disordered; that stretch reads MSRFFRGGDD…VKSAKDKRFD (92 aa). Over residues 16-53 the composition is skewed to acidic residues; that stretch reads SSDEEELYSTSEEEEEEDQDQEESSEEEDEEESSDEDE. Residues 79-92 are compositionally biased toward basic and acidic residues; sequence GATKVKSAKDKRFD. Residues 604–778 form the PCI domain; the sequence is FHMHINLELL…KTVIFRKGVE (175 aa). A disordered region spans residues 808 to 863; that stretch reads TQGSANAFSRKDGRQGGQRGGGQRSGRGGARAGGNAQRQAGGTQFTGGALGAAVRG. Over residues 822-839 the composition is skewed to gly residues; sequence QGGQRGGGQRSGRGGARA. Over residues 840–850 the composition is skewed to low complexity; that stretch reads GGNAQRQAGGT.

Belongs to the eIF-3 subunit C family. Component of the eukaryotic translation initiation factor 3 (eIF-3) complex.

It is found in the cytoplasm. In terms of biological role, component of the eukaryotic translation initiation factor 3 (eIF-3) complex, which is involved in protein synthesis of a specialized repertoire of mRNAs and, together with other initiation factors, stimulates binding of mRNA and methionyl-tRNAi to the 40S ribosome. The eIF-3 complex specifically targets and initiates translation of a subset of mRNAs involved in cell proliferation. This chain is Eukaryotic translation initiation factor 3 subunit C, found in Chaetomium globosum (strain ATCC 6205 / CBS 148.51 / DSM 1962 / NBRC 6347 / NRRL 1970) (Soil fungus).